The primary structure comprises 100 residues: Large ribosomal subunit protein uL23 (100 aa).

It belongs to the universal ribosomal protein uL23 family. In terms of assembly, part of the 50S ribosomal subunit. Contacts protein L29, and trigger factor when it is bound to the ribosome.

One of the early assembly proteins it binds 23S rRNA. One of the proteins that surrounds the polypeptide exit tunnel on the outside of the ribosome. Forms the main docking site for trigger factor binding to the ribosome. This Thermotoga sp. (strain RQ2) protein is Large ribosomal subunit protein uL23.